Consider the following 515-residue polypeptide: Interferon alpha/beta receptor 2 (515 aa).

An N-terminal signal peptide occupies residues 1 to 26 (MLLSQNAFIFRSLNLVLMVYISLVFG). At 27–243 (ISYDSPDYTD…QESESAESAK (217 aa)) the chain is on the extracellular side. Disulfide bonds link Cys39/Cys122 and Cys85/Cys93. 5 N-linked (GlcNAc...) asparagine glycosylation sites follow: Asn58, Asn87, Asn116, Asn188, and Asn192. A disulfide bond links Cys207 and Cys227. A helical transmembrane segment spans residues 244 to 264 (IGGIITVFLIALVLTSTIVTL). At 265–515 (KWIGYICLRN…VDLGDGYIMR (251 aa)) the chain is on the cytoplasmic side. 2 disordered regions span residues 318–418 (YDDE…EGSG) and 455–515 (EMVD…YIMR). Tyr337 is subject to Phosphotyrosine. Acidic residues predominate over residues 362–375 (PESEEEPDLPEVDV). Phosphoserine is present on Ser400. The mediates interaction with STAT2 (and required for the recruitment of USP18) stretch occupies residues 418 to 444 (GGRITFNVDLNSVFLRVLDDEDSDDLE). Residues 464-488 (NVQSNHLLASGEGTQPTFPSPSSEG) are compositionally biased toward polar residues. Ser467 carries the post-translational modification Phosphoserine. Residue Tyr512 is modified to Phosphotyrosine.

This sequence belongs to the type II cytokine receptor family. Heterodimer with IFNAR1; forming the receptor for type I interferon. Interacts with JAK1. Interacts with the transcriptional factors STAT1 and STAT2. Interacts with USP18; indirectly via STAT2, it negatively regulates the assembly of the ternary interferon-IFNAR1-IFNAR2 complex and therefore type I interferon signaling. Phosphorylated on tyrosine residues upon interferon binding. Phosphorylation at Tyr-337 or Tyr-512 are sufficient to mediate interferon dependent activation of STAT1, STAT2 and STAT3 leading to antiproliferative effects on many different cell types. In terms of processing, glycosylated. In terms of tissue distribution, isoform 3 is detected in the urine (at protein level). Expressed in blood cells. Expressed in lymphoblastoid and fibrosarcoma cell lines.

Its subcellular location is the cell membrane. The protein resides in the secreted. Functionally, together with IFNAR1, forms the heterodimeric receptor for type I interferons (including interferons alpha, beta, epsilon, omega and kappa). Type I interferon binding activates the JAK-STAT signaling cascade, resulting in transcriptional activation or repression of interferon-regulated genes that encode the effectors of the interferon response. Mechanistically, type I interferon-binding brings the IFNAR1 and IFNAR2 subunits into close proximity with one another, driving their associated Janus kinases (JAKs) (TYK2 bound to IFNAR1 and JAK1 bound to IFNAR2) to cross-phosphorylate one another. The activated kinases phosphorylate specific tyrosine residues on the intracellular domains of IFNAR1 and IFNAR2, forming docking sites for the STAT transcription factors (STAT1, STAT2 and STAT). STAT proteins are then phosphorylated by the JAKs, promoting their translocation into the nucleus to regulate expression of interferon-regulated genes. Its function is as follows. Potent inhibitor of type I IFN receptor activity. The polypeptide is Interferon alpha/beta receptor 2 (IFNAR2) (Homo sapiens (Human)).